The following is a 166-amino-acid chain: Plastocyanin, chloroplastic (166 aa).

Residues 1-67 (MASLTSAAVT…GAVLASNALA (67 aa)) constitute a chloroplast transit peptide. Residues 68–166 (VEVLLGGSDG…AGMAGKITVN (99 aa)) enclose the Plastocyanin-like domain. Cu cation contacts are provided by His-104, Cys-151, His-154, and Met-159.

This sequence belongs to the plastocyanin family. It depends on Cu(2+) as a cofactor.

The protein localises to the plastid. It localises to the chloroplast thylakoid membrane. Its function is as follows. Participates in electron transfer between P700 and the cytochrome b6-f complex in photosystem I. This chain is Plastocyanin, chloroplastic (PETE), found in Fritillaria agrestis (Stinkbells).